Consider the following 104-residue polypeptide: Histone-like protein p6 (104 aa).

The DNA-binding element occupies 1-19; the sequence is MAKMMQREITKTTVNVAKM. The disordered stretch occupies residues 85–104; that stretch reads VEKDEDQEEQTEAPEEQVAE. A compositionally biased stretch (acidic residues) spans 88-104; sequence DEDQEEQTEAPEEQVAE.

The protein belongs to the phi29likevirus histone-like protein p6 family. Homodimer. Homomultimer. Binds to double-stranded DNA giving rise to multimeric nucleoprotein complexes. Binding specificity for the viral DNA is based on supercoiling, the viral genome having a negative superhelicity lower than that of plasmid DNA. Interacts with the DNA replication protein p17; this interaction optimizes the binding of protein p6 at the viral DNA ends, thus favoring the initiation of replication. Interacts with the late genes activator p4 (via C-terminus).

Functionally, histone-like nucleoprotein that binds to the viral dsDNA and responsible for wrapping and compacting the viral DNA about 4-fold. Forms a nucleoprotein complex in which the DNA adopts a right-handed toroidal conformation winding around a protein core. Binds ito most, if not all, the viral genome, although with different affinity, the highest one corresponding to the genome ends. The formation of the nucleoprotein complex at the genome ends, activates the initiation of viral DNA replication. The binding of p6 would recruit the complex formed by the TP and the DNA polymerase to the origin. Protein p6 also represses early transcription from promoter C2, and, together with protein p4, represses transcription from promoters A2b and A2c and activates late transcription from promoter A3. Protein p6 is therefore involved in the early to late transcription switch. The formation of the nucleoprotein complex at the right end of the phage genome where the early promoter C2 is located affects local topology, which may contribute to the promoter repression. This is Histone-like protein p6 (6) from Bacillus subtilis (Bacteriophage phi-29).